The following is a 150-amino-acid chain: Small ribosomal subunit protein uS9 (150 aa).

It belongs to the universal ribosomal protein uS9 family.

This is Small ribosomal subunit protein uS9 from Mycolicibacterium smegmatis (strain ATCC 700084 / mc(2)155) (Mycobacterium smegmatis).